Reading from the N-terminus, the 612-residue chain is Elongation factor 4 (612 aa).

Residues 11–193 enclose the tr-type G domain; that stretch reads KHIRNFSIVA…EIVKKVPAPD (183 aa). Residues 23–28 and 140–143 contribute to the GTP site; these read DHGKST and NKID.

The protein belongs to the TRAFAC class translation factor GTPase superfamily. Classic translation factor GTPase family. LepA subfamily.

It localises to the cell membrane. It catalyses the reaction GTP + H2O = GDP + phosphate + H(+). In terms of biological role, required for accurate and efficient protein synthesis under certain stress conditions. May act as a fidelity factor of the translation reaction, by catalyzing a one-codon backward translocation of tRNAs on improperly translocated ribosomes. Back-translocation proceeds from a post-translocation (POST) complex to a pre-translocation (PRE) complex, thus giving elongation factor G a second chance to translocate the tRNAs correctly. Binds to ribosomes in a GTP-dependent manner. The polypeptide is Elongation factor 4 (Lactobacillus johnsonii (strain CNCM I-12250 / La1 / NCC 533)).